A 275-amino-acid chain; its full sequence is Interleukin-2 receptor subunit alpha (275 aa).

The N-terminal stretch at 1-21 (MEPSLLLWGILTFVVVHGHVT) is a signal peptide. In terms of domain architecture, Sushi 1 spans 22–84 (ELCDENPPDI…SWENQCRCIS (63 aa)). Residues 22–243 (ELCDENPPDI…ESFVFTTEYQ (222 aa)) are Extracellular-facing. Disulfide bonds link Cys-24–Cys-67, Cys-49–Cys-80, and Cys-51–Cys-82. 2 N-linked (GlcNAc...) asparagine glycosylation sites follow: Asn-60 and Asn-70. Residues 91–118 (DGQIIPKPEEQKGKSPMGMQSQMQPTDQ) form a disordered region. Positions 108 to 118 (GMQSQMQPTDQ) are enriched in polar residues. Residues 123–186 (GHCREPPPWE…WTQPRLQCLS (64 aa)) enclose the Sushi 2 domain. Disulfide bonds link Cys-125-Cys-168 and Cys-152-Cys-184. The interval 188–213 (RSDGWFPDDEEPQASTDAALGSDTSC) is disordered. The chain crosses the membrane as a helical span at residues 244 to 262 (IAVAGCVLLLISIVLLSGL). Topologically, residues 263 to 275 (TWQRRWRKSRRTI) are cytoplasmic.

In terms of assembly, non-covalent dimer of an alpha and a beta subunit. IL2R exists in 3 different forms: a high affinity dimer, an intermediate affinity monomer (beta subunit), and a low affinity monomer (alpha subunit). The high and intermediate affinity forms also associate with a gamma subunit.

The protein resides in the membrane. Receptor for interleukin-2. The receptor is involved in the regulation of immune tolerance by controlling regulatory T cells (TREGs) activity. TREGs suppress the activation and expansion of autoreactive T-cells. The polypeptide is Interleukin-2 receptor subunit alpha (IL2RA) (Felis catus (Cat)).